A 153-amino-acid polypeptide reads, in one-letter code: Methylglyoxal synthase (153 aa).

Residues 3-153 (DQVNRPKGVT…SYLSRDVPGN (151 aa)) enclose the MGS-like domain. Residues H19, K23, 45 to 48 (TGTT), and 65 to 66 (SG) each bind substrate. D71 functions as the Proton donor/acceptor in the catalytic mechanism. Position 98 (H98) interacts with substrate.

This sequence belongs to the methylglyoxal synthase family.

The enzyme catalyses dihydroxyacetone phosphate = methylglyoxal + phosphate. Catalyzes the formation of methylglyoxal from dihydroxyacetone phosphate. This is Methylglyoxal synthase from Hahella chejuensis (strain KCTC 2396).